A 485-amino-acid chain; its full sequence is MDVKAAPNGVATIEDRILRITGYYGYYPGYSSQKSTTRSSVTRCKPGPNCPSSHSSISRQLSPLSVTEDSSAPILELQSRGSSGVCGRRVERQSRSGDDGTQTRPESSSQENGLKARCLSCTSMVLKTIWGLLIILSVSSSWVGTTQIVKITYKNFYCPFFMTWFSTNWNIMFFPVYYSGHLATAQEKQSPIKKFRECSRIFGEDGLTLKLFLKRTAPFSILWTLTNYLYLLALKKLTATDVSALFCCNKAFVFLLSWIVLKDRFMGVRIVAAIMAITGIVMMAYADNFHADSIIGVAFAVGSASTSALYKVLFKMFLGSANFGEAAHFVSTLGFFNLIFISFTPIILYFTKVEHWSSFAALPWGCLCGMAGLWLAFNILVNVGVVLTYPILISIGTVLSVPGNAAVDLLKQEVIFNVVRLAATIIICIGFLLMLLPEEWDEITLRFINSLKEKKSEEHVEDLTDVSVHLRSRSRVNGTVSIPLA.

Composition is skewed to polar residues over residues serine 32–threonine 42 and cysteine 50–leucine 64. Disordered stretches follow at residues serine 32–leucine 64 and glutamine 78–glutamate 111. Residues arginine 88–aspartate 98 are compositionally biased toward basic and acidic residues. Residues aspartate 99–glutamate 111 are compositionally biased toward polar residues. 10 helical membrane passes run isoleucine 129 to valine 149, phenylalanine 156 to valine 176, alanine 217 to leucine 234, aspartate 241 to leucine 261, phenylalanine 265 to tyrosine 285, isoleucine 294 to phenylalanine 314, phenylalanine 329 to tyrosine 349, phenylalanine 359 to valine 381, valine 383 to alanine 405, and valine 414 to methionine 434. Residues leucine 225–tyrosine 285 enclose the EamA domain.

It belongs to the SLC35F solute transporter family.

The protein resides in the membrane. Putative solute transporter. This Mus musculus (Mouse) protein is Solute carrier family 35 member F4 (Slc35f4).